An 81-amino-acid chain; its full sequence is Photosystem I iron-sulfur center (81 aa).

4Fe-4S ferredoxin-type domains lie at 2–31 (SHTV…MAPW) and 39–68 (VASA…VRVY). Cys-11, Cys-14, Cys-17, Cys-21, Cys-48, Cys-51, Cys-54, and Cys-58 together coordinate [4Fe-4S] cluster.

The eukaryotic PSI reaction center is composed of at least 11 subunits. [4Fe-4S] cluster is required as a cofactor.

It localises to the plastid. The protein resides in the chloroplast thylakoid membrane. The catalysed reaction is reduced [plastocyanin] + hnu + oxidized [2Fe-2S]-[ferredoxin] = oxidized [plastocyanin] + reduced [2Fe-2S]-[ferredoxin]. Its function is as follows. Apoprotein for the two 4Fe-4S centers FA and FB of photosystem I (PSI); essential for photochemical activity. FB is the terminal electron acceptor of PSI, donating electrons to ferredoxin. The C-terminus interacts with PsaA/B/D and helps assemble the protein into the PSI complex. Required for binding of PsaD and PsaE to PSI. PSI is a plastocyanin/cytochrome c6-ferredoxin oxidoreductase, converting photonic excitation into a charge separation, which transfers an electron from the donor P700 chlorophyll pair to the spectroscopically characterized acceptors A0, A1, FX, FA and FB in turn. The sequence is that of Photosystem I iron-sulfur center from Tupiella akineta (Green alga).